The sequence spans 441 residues: MEKSQSSPTKDASTKQKNVDDWLPITSSRNAKWWYSAFHNVTAMVGAGVLSLPYAMSNLGWGPGVTIMIMSWLITFYTLWQMVQMHEMVPGKRFDRYHELGQHAFGEKLGLWIVVPQQLIVEVGVDIVYMVTGGKSLKKIHDLLCTDCKNIRTTYWIMIFASIHFVLAHLPNFNSISIVSLAAAVMSLSYSTIAWATSVKKGVHPNVDYSSRASTTSGNVFNFLNALGDVAFAYAGHNVVLEIQATIPSTPEKPSKIAMWKGVVVAYIVVAICYFPVAFVCYYIFGNSVDDNILMTLEKPIWLIAIANAFVVVHVIGSYQIYAMPVFDMLETFLVKKMMFAPSFKLRFITRTLYVAFTMFVAICIPFFGGLLGFFGGFAFAPTTYYLPCIMWLCIKKPKKYGLSWCINWFCIVVGVILTILAPIGGLRTIIISAKNYEFFS.

The Cytoplasmic portion of the chain corresponds to 1 to 32 (MEKSQSSPTKDASTKQKNVDDWLPITSSRNAK). A helical transmembrane segment spans residues 33–53 (WWYSAFHNVTAMVGAGVLSLP). Topologically, residues 54-58 (YAMSN) are extracellular. The chain crosses the membrane as a helical span at residues 59 to 79 (LGWGPGVTIMIMSWLITFYTL). Residues 80–110 (WQMVQMHEMVPGKRFDRYHELGQHAFGEKLG) lie on the Cytoplasmic side of the membrane. Residues 111–131 (LWIVVPQQLIVEVGVDIVYMV) traverse the membrane as a helical segment. Residues 132–155 (TGGKSLKKIHDLLCTDCKNIRTTY) are Extracellular-facing. 2 helical membrane-spanning segments follow: residues 156-176 (WIMI…FNSI) and 177-197 (SIVS…AWAT). Topologically, residues 198 to 222 (SVKKGVHPNVDYSSRASTTSGNVFN) are extracellular. A helical membrane pass occupies residues 223 to 243 (FLNALGDVAFAYAGHNVVLEI). Residues 244–264 (QATIPSTPEKPSKIAMWKGVV) lie on the Cytoplasmic side of the membrane. A helical transmembrane segment spans residues 265–285 (VAYIVVAICYFPVAFVCYYIF). At 286-300 (GNSVDDNILMTLEKP) the chain is on the extracellular side. The chain crosses the membrane as a helical span at residues 301–321 (IWLIAIANAFVVVHVIGSYQI). At 322-347 (YAMPVFDMLETFLVKKMMFAPSFKLR) the chain is on the cytoplasmic side. The chain crosses the membrane as a helical span at residues 348–370 (FITRTLYVAFTMFVAICIPFFGG). The Extracellular segment spans residues 371 to 373 (LLG). The chain crosses the membrane as a helical span at residues 374–396 (FFGGFAFAPTTYYLPCIMWLCIK). Residues 397–406 (KPKKYGLSWC) lie on the Cytoplasmic side of the membrane. A helical membrane pass occupies residues 407 to 427 (INWFCIVVGVILTILAPIGGL). Residues 428–441 (RTIIISAKNYEFFS) lie on the Extracellular side of the membrane.

Belongs to the amino acid/polyamine transporter 2 family. Amino acid/auxin permease (AAAP) (TC 2.A.18.2) subfamily.

It localises to the cell membrane. Amino acid transporter. This is Lysine histidine transporter-like 2 from Arabidopsis thaliana (Mouse-ear cress).